A 62-amino-acid chain; its full sequence is Sperm histone (62 aa).

Residues 1-62 are disordered; sequence MARYRRSRTR…GSRRRRRRRY (62 aa). At Thr9 the chain carries Phosphothreonine.

It belongs to the protamine P1 family. As to expression, testis.

It is found in the nucleus. The protein resides in the chromosome. Its function is as follows. Protamines substitute for histones in the chromatin of sperm during the haploid phase of spermatogenesis. They compact sperm DNA into a highly condensed, stable and inactive complex. This is Sperm histone from Gallus gallus (Chicken).